Consider the following 474-residue polypeptide: Glutamate--tRNA ligase (474 aa).

The 'HIGH' region motif lies at 11-21 (PSPTGFLHIGG). The 'KMSKS' region motif lies at 240-244 (KLSKR). ATP is bound at residue Lys-243.

It belongs to the class-I aminoacyl-tRNA synthetase family. Glutamate--tRNA ligase type 1 subfamily. Monomer.

It localises to the cytoplasm. It catalyses the reaction tRNA(Glu) + L-glutamate + ATP = L-glutamyl-tRNA(Glu) + AMP + diphosphate. Functionally, catalyzes the attachment of glutamate to tRNA(Glu) in a two-step reaction: glutamate is first activated by ATP to form Glu-AMP and then transferred to the acceptor end of tRNA(Glu). The sequence is that of Glutamate--tRNA ligase from Nitrobacter hamburgensis (strain DSM 10229 / NCIMB 13809 / X14).